The following is a 113-amino-acid chain: Small ribosomal subunit protein mS41 (113 aa).

The transit peptide at 1–22 (MLILKRIFIIRNFIFPFSNCRY) directs the protein to the mitochondrion.

This sequence belongs to the mitochondrion-specific ribosomal protein mS41 family. As to quaternary structure, component of the mitochondrial small ribosomal subunit (mt-SSU). Mature yeast 74S mitochondrial ribosomes consist of a small (37S) and a large (54S) subunit. The 37S small subunit contains a 15S ribosomal RNA (15S mt-rRNA) and at least 32 different proteins. The 54S large subunit contains a 21S rRNA (21S mt-rRNA) and at least 45 different proteins.

The protein resides in the mitochondrion. Its function is as follows. Component of the mitochondrial ribosome (mitoribosome), a dedicated translation machinery responsible for the synthesis of mitochondrial genome-encoded proteins, including at least some of the essential transmembrane subunits of the mitochondrial respiratory chain. The mitoribosomes are attached to the mitochondrial inner membrane and translation products are cotranslationally integrated into the membrane. mS41 is involved in telomere length regulation. The sequence is that of Small ribosomal subunit protein mS41 (fyv4) from Schizosaccharomyces pombe (strain 972 / ATCC 24843) (Fission yeast).